The sequence spans 181 residues: Dual-action ribosomal maturation protein DarP (181 aa).

This sequence belongs to the DarP family.

The protein resides in the cytoplasm. Functionally, member of a network of 50S ribosomal subunit biogenesis factors which assembles along the 30S-50S interface, preventing incorrect 23S rRNA structures from forming. Promotes peptidyl transferase center (PTC) maturation. The sequence is that of Dual-action ribosomal maturation protein DarP from Actinobacillus succinogenes (strain ATCC 55618 / DSM 22257 / CCUG 43843 / 130Z).